Reading from the N-terminus, the 152-residue chain is Immunity protein YobK (152 aa).

Interacts with cognate toxin YobL but not with non-cognate putative toxin YeeF. The interaction inhibits the toxic activity of YobL.

It localises to the cytoplasm. Functionally, immunity component of one of 6 LXG toxin-immunity modules in this strain. They promote kin selection, mediate competition in biofilms, and drive spatial segregation of different strains, indicating that LXG toxins may help avoid warfare between strains in biofilms. Mediates intercellular competition during biofilm formation; disruption of the operon disadvantages the bacteria, but overexpression of the cognate immunity protein restores growth in competition with wild-type. In situ neutralizes the toxic effect of cognate toxin YobL. Neutralizes the toxic activity of cognate toxin YobL upon expression in E.coli. Does not have immunity protein activity on other LXG toxins. The protein is Immunity protein YobK (yobK) of Bacillus subtilis (strain 168).